The primary structure comprises 450 residues: 3-phosphoshikimate 1-carboxyvinyltransferase (450 aa).

Residues Lys28, Ser29, and Arg33 each contribute to the 3-phosphoshikimate site. Lys28 contacts phosphoenolpyruvate. 2 residues coordinate phosphoenolpyruvate: Gly100 and Arg128. Residues Ser173, Gln175, Asp326, and Lys353 each coordinate 3-phosphoshikimate. Gln175 serves as a coordination point for phosphoenolpyruvate. Asp326 serves as the catalytic Proton acceptor. Arg357 and Arg402 together coordinate phosphoenolpyruvate.

This sequence belongs to the EPSP synthase family. Monomer.

It is found in the cytoplasm. The catalysed reaction is 3-phosphoshikimate + phosphoenolpyruvate = 5-O-(1-carboxyvinyl)-3-phosphoshikimate + phosphate. Its pathway is metabolic intermediate biosynthesis; chorismate biosynthesis; chorismate from D-erythrose 4-phosphate and phosphoenolpyruvate: step 6/7. Functionally, catalyzes the transfer of the enolpyruvyl moiety of phosphoenolpyruvate (PEP) to the 5-hydroxyl of shikimate-3-phosphate (S3P) to produce enolpyruvyl shikimate-3-phosphate and inorganic phosphate. This chain is 3-phosphoshikimate 1-carboxyvinyltransferase, found in Brucella abortus biovar 1 (strain 9-941).